We begin with the raw amino-acid sequence, 656 residues long: Protein sly1 homolog (656 aa).

4 repeat units span residues 85–121 (DENL…NLAA), 203–245 (RNSA…FSFQ), 419–456 (LELL…ERLR), and 460–496 (QSAG…GGGT). Positions 85–496 (DENLDRIQQD…QATQYEGGGT (412 aa)) are 4 X approximate repeats.

Belongs to the STXBP/unc-18/SEC1 family.

Its subcellular location is the cytoplasm. The protein localises to the membrane. Its function is as follows. Non-vital for development. This is Protein sly1 homolog (Slh) from Drosophila virilis (Fruit fly).